The chain runs to 164 residues: Nucleotide-binding protein Acid345_2028 (164 aa).

This sequence belongs to the YajQ family.

Its function is as follows. Nucleotide-binding protein. This is Nucleotide-binding protein Acid345_2028 from Koribacter versatilis (strain Ellin345).